A 201-amino-acid chain; its full sequence is Methylated-DNA--protein-cysteine methyltransferase (201 aa).

Residues Tyr131, Gly132, and Arg146 each contribute to the DNA site. Cys163 serves as the catalytic Nucleophile; methyl group acceptor.

Belongs to the MGMT family.

It is found in the nucleus. It catalyses the reaction a 6-O-methyl-2'-deoxyguanosine in DNA + L-cysteinyl-[protein] = S-methyl-L-cysteinyl-[protein] + a 2'-deoxyguanosine in DNA. The catalysed reaction is a 4-O-methyl-thymidine in DNA + L-cysteinyl-[protein] = a thymidine in DNA + S-methyl-L-cysteinyl-[protein]. Involved in the cellular defense against the biological effects of O6-methylguanine (O6-MeG) and O4-methylthymine (O4-MeT) in DNA. Repairs the methylated nucleobase in DNA by stoichiometrically transferring the methyl group to a cysteine residue in the enzyme. This is a suicide reaction: the enzyme is irreversibly inactivated. The polypeptide is Methylated-DNA--protein-cysteine methyltransferase (MGT1) (Lodderomyces elongisporus (strain ATCC 11503 / CBS 2605 / JCM 1781 / NBRC 1676 / NRRL YB-4239) (Yeast)).